The primary structure comprises 307 residues: 4-diphosphocytidyl-2-C-methyl-D-erythritol kinase (307 aa).

Residue K16 is part of the active site. ATP is bound at residue P101 to A111. The active site involves D143.

It belongs to the GHMP kinase family. IspE subfamily.

It catalyses the reaction 4-CDP-2-C-methyl-D-erythritol + ATP = 4-CDP-2-C-methyl-D-erythritol 2-phosphate + ADP + H(+). The protein operates within isoprenoid biosynthesis; isopentenyl diphosphate biosynthesis via DXP pathway; isopentenyl diphosphate from 1-deoxy-D-xylulose 5-phosphate: step 3/6. Its function is as follows. Catalyzes the phosphorylation of the position 2 hydroxy group of 4-diphosphocytidyl-2C-methyl-D-erythritol. The chain is 4-diphosphocytidyl-2-C-methyl-D-erythritol kinase from Nocardia farcinica (strain IFM 10152).